A 365-amino-acid polypeptide reads, in one-letter code: Probable ethanolamine-phosphate cytidylyltransferase (365 aa).

A disordered region spans residues 344–365; that stretch reads EERQRRKMGKNATEQTTIKTYA. Polar residues predominate over residues 355–365; it reads ATEQTTIKTYA.

It belongs to the cytidylyltransferase family.

It carries out the reaction phosphoethanolamine + CTP + H(+) = CDP-ethanolamine + diphosphate. Its pathway is phospholipid metabolism; phosphatidylethanolamine biosynthesis; phosphatidylethanolamine from ethanolamine: step 2/3. In Schizosaccharomyces pombe (strain 972 / ATCC 24843) (Fission yeast), this protein is Probable ethanolamine-phosphate cytidylyltransferase.